The sequence spans 619 residues: Auxin efflux carrier component 7 (619 aa).

The Extracellular portion of the chain corresponds to 1–7 (MITWHDL). The chain crosses the membrane as a helical span at residues 8–28 (YTVLTAVIPLYVAMILAYGSV). Topologically, residues 29-38 (RWWKIFSPDQ) are cytoplasmic. Residues 39–59 (CSGINRFVAIFAVPLLSFHFI) form a helical membrane-spanning segment. A (indol-3-yl)acetate-binding site is contributed by Val51. Over 60 to 71 (SSNNPYAMNLRF) the chain is Extracellular. The chain crosses the membrane as a helical span at residues 72 to 92 (IAADTLQKLIMLTLLIIWANF). Residues 93–101 (TRSGSLEWS) are Cytoplasmic-facing. Residues 102-122 (ITIFSLSTLPNTLVMGIPLLI) traverse the membrane as a helical segment. The (indol-3-yl)acetate site is built by Asn112 and Leu114. The Extracellular segment spans residues 123 to 131 (AMYGEYSGS). A helical membrane pass occupies residues 132 to 152 (LMVQIVVLQCIIWYTLLLFLF). Tyr145 provides a ligand contact to (indol-3-yl)acetate. Residues 153–479 (EYRGAKILIM…LIRNPNTYSS (327 aa)) lie on the Cytoplasmic side of the membrane. A phosphoserine mark is found at Ser229, Ser246, and Ser286. Residues 306 to 340 (GAPGSYPAPNPEFSTGNKTGSKAPKENHHHVGKSN) form a disordered region. A Phosphothreonine modification is found at Thr320. Ser357 bears the Phosphoserine mark. Residues 393–413 (HTQNGENKAGPMNGDYGGEEE) form a disordered region. A helical membrane pass occupies residues 480 to 500 (LIGLIWALVAFRWDVAMPKII). Residues 501–503 (QQS) are Extracellular-facing. The chain crosses the membrane as a helical span at residues 504-524 (ISILSDAGLGMAMFSLGLFMA). Residues 525–538 (LQPKLIACGNSTAT) are Cytoplasmic-facing. The helical transmembrane segment at 539–559 (FAMAVRFFTGPAVMAVAAMAI) threads the bilayer. Over 560–564 (GLRGD) the chain is Extracellular. Residues 565 to 585 (LLRVAIVQAALPQGIVPFVFA) traverse the membrane as a helical segment. Positions 579 and 580 each coordinate (indol-3-yl)acetate. Residues 586-598 (KEYNVHPAILSTG) are Cytoplasmic-facing. Residues 599–619 (VIFGMLIALPITLVYYILLGL) form a helical membrane-spanning segment.

Belongs to the auxin efflux carrier (TC 2.A.69.1) family. Homodimer.

It localises to the cell membrane. Functionally, acts as a component of the auxin efflux carrier. Mediates the initial auxin gradient which contributes to the establishment of the apical-basal axis in early embryogenesis. Together with PIN3 and PIN4, involved in the connective auxin transport (CAT) that ensures communication across the shoot system, and modulates strigolactone-mediated shoot branching control. The abcb19 pin3 pin4 pin7 quadruple mutant exhibits an additive phenotype on strigolactone-mediated bud outgrowth responses and shoot branching control. This Arabidopsis thaliana (Mouse-ear cress) protein is Auxin efflux carrier component 7.